A 372-amino-acid polypeptide reads, in one-letter code: Sulfate/thiosulfate import ATP-binding protein CysA (372 aa).

In terms of domain architecture, ABC transporter spans 3–237 (IQVQHVTKRF…PATPFVYGFL (235 aa)). 35–42 (GPSGCGKT) is an ATP binding site.

It belongs to the ABC transporter superfamily. Sulfate/tungstate importer (TC 3.A.1.6) family. In terms of assembly, the complex is composed of two ATP-binding proteins (CysA), two transmembrane proteins (CysT and CysW) and a solute-binding protein (CysP).

It is found in the cell inner membrane. It catalyses the reaction sulfate(out) + ATP + H2O = sulfate(in) + ADP + phosphate + H(+). It carries out the reaction thiosulfate(out) + ATP + H2O = thiosulfate(in) + ADP + phosphate + H(+). Part of the ABC transporter complex CysAWTP involved in sulfate/thiosulfate import. Responsible for energy coupling to the transport system. The protein is Sulfate/thiosulfate import ATP-binding protein CysA of Ralstonia nicotianae (strain ATCC BAA-1114 / GMI1000) (Ralstonia solanacearum).